The sequence spans 233 residues: Nickel import system ATP-binding protein NikE (233 aa).

Residues 2–228 (IELKHVTFGY…DRHPYTKELV (227 aa)) enclose the ABC transporter domain. 35 to 42 (GESGCGKS) contributes to the ATP binding site.

Belongs to the ABC transporter superfamily. As to quaternary structure, the complex is composed of two ATP-binding proteins (NikD and NikE), two transmembrane proteins (NikB and NikC) and a solute-binding protein (NikA).

The protein localises to the cell membrane. The catalysed reaction is Ni(2+)(out) + ATP + H2O = Ni(2+)(in) + ADP + phosphate + H(+). Functionally, part of the ABC transporter complex NikABCDE (Opp2) involved in nickel import. Probably responsible for energy coupling to the transport system. The protein is Nickel import system ATP-binding protein NikE of Staphylococcus aureus (strain MRSA252).